Consider the following 285-residue polypeptide: Polyamine aminopropyltransferase (285 aa).

In terms of domain architecture, PABS spans Q2 to K237. Q31 provides a ligand contact to S-methyl-5'-thioadenosine. D86 is a binding site for spermidine. Residues E106 and D137–G138 contribute to the S-methyl-5'-thioadenosine site. The active-site Proton acceptor is D155. D155–D158 is a binding site for spermidine.

This sequence belongs to the spermidine/spermine synthase family. In terms of assembly, homodimer or homotetramer.

Its subcellular location is the cytoplasm. The enzyme catalyses S-adenosyl 3-(methylsulfanyl)propylamine + putrescine = S-methyl-5'-thioadenosine + spermidine + H(+). The protein operates within amine and polyamine biosynthesis; spermidine biosynthesis; spermidine from putrescine: step 1/1. Functionally, catalyzes the irreversible transfer of a propylamine group from the amino donor S-adenosylmethioninamine (decarboxy-AdoMet) to putrescine (1,4-diaminobutane) to yield spermidine. The chain is Polyamine aminopropyltransferase from Agathobacter rectalis (strain ATCC 33656 / DSM 3377 / JCM 17463 / KCTC 5835 / VPI 0990) (Eubacterium rectale).